We begin with the raw amino-acid sequence, 1545 residues long: Pentafunctional AROM polypeptide (1545 aa).

The segment at 1-383 is 3-dehydroquinate synthase; sequence MSGLIEKVSI…YEPKASYVND (383 aa). NAD(+)-binding positions include 44–46, 82–85, 113–115, and aspartate 118; these read DSN, EANK, and GGV. Position 129 (arginine 129) interacts with 7-phospho-2-dehydro-3-deoxy-D-arabino-heptonate. Residue 138 to 139 participates in NAD(+) binding; that stretch reads TS. 7-phospho-2-dehydro-3-deoxy-D-arabino-heptonate contacts are provided by aspartate 145 and lysine 151. Lysine 160 contacts NAD(+). Asparagine 161 is a 7-phospho-2-dehydro-3-deoxy-D-arabino-heptonate binding site. NAD(+) is bound by residues 178–181 and asparagine 189; that span reads FLET. Residue glutamate 193 participates in Zn(2+) binding. Residues 193–196 and lysine 249 contribute to the 7-phospho-2-dehydro-3-deoxy-D-arabino-heptonate site; that span reads EVVK. Glutamate 259 serves as the catalytic Proton acceptor; for 3-dehydroquinate synthase activity. 7-phospho-2-dehydro-3-deoxy-D-arabino-heptonate is bound by residues 263–267 and histidine 270; that span reads RNLLN. Residue histidine 270 coordinates Zn(2+). The active-site Proton acceptor; for 3-dehydroquinate synthase activity is histidine 274. Residues histidine 286 and lysine 355 each coordinate 7-phospho-2-dehydro-3-deoxy-D-arabino-heptonate. Histidine 286 is a Zn(2+) binding site. The interval 396 to 840 is EPSP synthase; it reads VKDFNSAPST…WDILHTTFNV (445 aa). Cysteine 822 acts as the For EPSP synthase activity in catalysis. Residues 859–1049 are shikimate kinase; that stretch reads DKSIIVIGMR…IPNGRSAFVC (191 aa). 866-873 serves as a coordination point for ATP; that stretch reads GMRAAGKS. A 3-dehydroquinase region spans residues 1050–1261; sequence LTYEDLAPVS…AAPGQLTLKE (212 aa). Residue histidine 1166 is the Proton acceptor; for 3-dehydroquinate dehydratase activity of the active site. Lysine 1195 (schiff-base intermediate with substrate; for 3-dehydroquinate dehydratase activity) is an active-site residue. Positions 1274–1545 are shikimate dehydrogenase; that stretch reads RKKFYIVGKP…GYQFSSHIDL (272 aa).

It in the N-terminal section; belongs to the sugar phosphate cyclases superfamily. Dehydroquinate synthase family. In the 2nd section; belongs to the EPSP synthase family. The protein in the 3rd section; belongs to the shikimate kinase family. This sequence in the 4th section; belongs to the type-I 3-dehydroquinase family. It in the C-terminal section; belongs to the shikimate dehydrogenase family. In terms of assembly, homodimer. The cofactor is Zn(2+).

The protein resides in the cytoplasm. It catalyses the reaction 7-phospho-2-dehydro-3-deoxy-D-arabino-heptonate = 3-dehydroquinate + phosphate. The enzyme catalyses 3-dehydroquinate = 3-dehydroshikimate + H2O. It carries out the reaction shikimate + NADP(+) = 3-dehydroshikimate + NADPH + H(+). The catalysed reaction is shikimate + ATP = 3-phosphoshikimate + ADP + H(+). It catalyses the reaction 3-phosphoshikimate + phosphoenolpyruvate = 5-O-(1-carboxyvinyl)-3-phosphoshikimate + phosphate. The protein operates within metabolic intermediate biosynthesis; chorismate biosynthesis; chorismate from D-erythrose 4-phosphate and phosphoenolpyruvate: step 2/7. Its pathway is metabolic intermediate biosynthesis; chorismate biosynthesis; chorismate from D-erythrose 4-phosphate and phosphoenolpyruvate: step 3/7. It functions in the pathway metabolic intermediate biosynthesis; chorismate biosynthesis; chorismate from D-erythrose 4-phosphate and phosphoenolpyruvate: step 4/7. It participates in metabolic intermediate biosynthesis; chorismate biosynthesis; chorismate from D-erythrose 4-phosphate and phosphoenolpyruvate: step 5/7. The protein operates within metabolic intermediate biosynthesis; chorismate biosynthesis; chorismate from D-erythrose 4-phosphate and phosphoenolpyruvate: step 6/7. Functionally, the AROM polypeptide catalyzes 5 consecutive enzymatic reactions in prechorismate polyaromatic amino acid biosynthesis. This Komagataella phaffii (strain GS115 / ATCC 20864) (Yeast) protein is Pentafunctional AROM polypeptide.